The following is a 142-amino-acid chain: MVLSAADKTNVKGVFSKISGHAEEYGAETLERMFTAYPQTKTYFPHFDLQHGSAQIKAHGKKVVAALVEAVNHIDDIAGALSKLSDLHAQKLRVDPVNFKFLGHCFLVVVAIHHPSALTAEVHASLDKFLCAVGTVLTAKYR.

Positions 2 to 142 (VLSAADKTNV…VGTVLTAKYR (141 aa)) constitute a Globin domain. An O2-binding site is contributed by histidine 59. Histidine 88 is a heme b binding site.

It belongs to the globin family. As to quaternary structure, heterotetramer of two alpha chains and two beta chains. As to expression, red blood cells.

Involved in oxygen transport from the lung to the various peripheral tissues. The polypeptide is Hemoglobin subunit alpha-A (HBAA) (Anser indicus (Bar-headed goose)).